The primary structure comprises 467 residues: Dimethylamine methyltransferase MtbB3 (467 aa).

Residue Pyl-356 is a non-standard amino acid, pyrrolysine.

It belongs to the dimethylamine methyltransferase family.

The enzyme catalyses Co(I)-[dimethylamine-specific corrinoid protein] + dimethylamine + H(+) = methyl-Co(III)-[dimethylamine-specific corrinoid protein] + methylamine. It participates in one-carbon metabolism; methanogenesis from dimethylamine. In terms of biological role, catalyzes the transfer of a methyl group from dimethylamine to the corrinoid cofactor of MtbC. The sequence is that of Dimethylamine methyltransferase MtbB3 (mtbB3) from Methanosarcina acetivorans (strain ATCC 35395 / DSM 2834 / JCM 12185 / C2A).